Consider the following 91-residue polypeptide: Small ribosomal subunit protein bS6 (91 aa).

This sequence belongs to the bacterial ribosomal protein bS6 family.

In terms of biological role, binds together with bS18 to 16S ribosomal RNA. The protein is Small ribosomal subunit protein bS6 of Leptospira interrogans serogroup Icterohaemorrhagiae serovar copenhageni (strain Fiocruz L1-130).